The primary structure comprises 431 residues: STE20-related kinase adapter protein alpha (431 aa).

Ser2 and Ser46 each carry phosphoserine. The Protein kinase domain occupies 69-379 (YELLTVIGKG…ASTLLNHSFF (311 aa)). The tract at residues 310-347 (LTMSPSRSVANSGLSDSLTTSTPRPSNGDSPSHPYHRT) is disordered. Polar residues predominate over residues 312 to 339 (MSPSRSVANSGLSDSLTTSTPRPSNGDS). 2 positions are modified to phosphothreonine; by LKB1: Thr329 and Thr401. Thr419 carries the phosphothreonine modification.

Belongs to the protein kinase superfamily. STE Ser/Thr protein kinase family. STE20 subfamily. As to quaternary structure, component of a trimeric complex composed of STK11/LKB1, STRAD (STRADA or STRADB) and CAB39/MO25 (CAB39/MO25alpha or CAB39L/MO25beta): the complex tethers STK11/LKB1 in the cytoplasm and stimulates its catalytic activity.

It localises to the nucleus. Its subcellular location is the cytoplasm. Its function is as follows. Pseudokinase which, in complex with CAB39/MO25 (CAB39/MO25alpha or CAB39L/MO25beta), binds to and activates STK11/LKB1. Adopts a closed conformation typical of active protein kinases and binds STK11/LKB1 as a pseudosubstrate, promoting conformational change of STK11/LKB1 in an active conformation. This chain is STE20-related kinase adapter protein alpha (STRADA), found in Pongo abelii (Sumatran orangutan).